We begin with the raw amino-acid sequence, 518 residues long: Serine--tRNA ligase, mitochondrial (518 aa).

Residues 1–34 (MAASMARLWWPFLARQGLRSRGRCVCSQNPRRSF) constitute a mitochondrion transit peptide. The residue at position 110 (lysine 110) is an N6-acetyllysine. N6-succinyllysine is present on lysine 195. 299 to 301 (TAE) provides a ligand contact to L-serine. Position 330 to 332 (330 to 332 (RAE)) interacts with ATP. Lysine 337 is modified (N6-succinyllysine). Valine 345 is a binding site for ATP. Glutamate 352 provides a ligand contact to L-serine. 418-421 (EVTS) contributes to the ATP binding site. Position 453 (threonine 453) interacts with L-serine. A disordered region spans residues 497–518 (PLQYIGPNQPQKPRLPGQSATR).

This sequence belongs to the class-II aminoacyl-tRNA synthetase family. Type-1 seryl-tRNA synthetase subfamily. As to quaternary structure, homodimer. The tRNA molecule probably binds across the dimer. Ubiquitous.

It is found in the mitochondrion matrix. The enzyme catalyses tRNA(Ser) + L-serine + ATP = L-seryl-tRNA(Ser) + AMP + diphosphate + H(+). It carries out the reaction tRNA(Sec) + L-serine + ATP = L-seryl-tRNA(Sec) + AMP + diphosphate + H(+). It participates in aminoacyl-tRNA biosynthesis; selenocysteinyl-tRNA(Sec) biosynthesis; L-seryl-tRNA(Sec) from L-serine and tRNA(Sec): step 1/1. Its function is as follows. Catalyzes the attachment of serine to tRNA(Ser). Is also probably able to aminoacylate tRNA(Sec) with serine, to form the misacylated tRNA L-seryl-tRNA(Sec), which will be further converted into selenocysteinyl-tRNA(Sec). The protein is Serine--tRNA ligase, mitochondrial (Sars2) of Mus musculus (Mouse).